An 85-amino-acid polypeptide reads, in one-letter code: Contulakin-Lt1 (85 aa).

The signal sequence occupies residues 1–22 (MRTAYWVMVMMMVGITAPLSEG). Positions 23-60 (RKLNDAIRGLVADYLTPQLLQSLVSAPYPEFQLDDPNL) are excised as a propeptide. C65 and C70 are disulfide-bonded. Positions 76–85 (RRRDLKKRNK) are excised as a propeptide.

It belongs to the conotoxin C superfamily. Expressed by the venom duct.

Its subcellular location is the secreted. Its function is as follows. Acts as an agonist of neurotensin receptors. It binds to human neurotensin type 1 receptor (NTSR1), rat neurotensin types 1 and 2 receptors (NTSR1/NTSR2) and mouse neurotensin type 3 receptor (SORT1). The protein is Contulakin-Lt1 of Conus litteratus (Lettered cone).